Reading from the N-terminus, the 160-residue chain is Serine-protein kinase RsbW (160 aa).

It belongs to the anti-sigma-factor family.

It carries out the reaction L-seryl-[protein] + ATP = O-phospho-L-seryl-[protein] + ADP + H(+). The enzyme catalyses L-threonyl-[protein] + ATP = O-phospho-L-threonyl-[protein] + ADP + H(+). Its function is as follows. Negative regulator of sigma-B activity. Phosphorylates and inactivates its specific antagonist protein, RsbV. Upon phosphorylation of RsbV, RsbW is released and binds to sigma-B, thereby blocking its ability to form an RNA polymerase holoenzyme (E-sigma-B). The protein is Serine-protein kinase RsbW of Bacillus mycoides (strain KBAB4) (Bacillus weihenstephanensis).